The chain runs to 177 residues: Cyclic pyranopterin monophosphate synthase (177 aa).

Substrate-binding positions include 89-91 and 125-126; these read LCH and ME. Residue Asp-140 is part of the active site.

This sequence belongs to the MoaC family. As to quaternary structure, homohexamer; trimer of dimers.

The enzyme catalyses (8S)-3',8-cyclo-7,8-dihydroguanosine 5'-triphosphate = cyclic pyranopterin phosphate + diphosphate. It functions in the pathway cofactor biosynthesis; molybdopterin biosynthesis. Functionally, catalyzes the conversion of (8S)-3',8-cyclo-7,8-dihydroguanosine 5'-triphosphate to cyclic pyranopterin monophosphate (cPMP). This is Cyclic pyranopterin monophosphate synthase from Streptomyces griseus subsp. griseus (strain JCM 4626 / CBS 651.72 / NBRC 13350 / KCC S-0626 / ISP 5235).